Here is a 163-residue protein sequence, read N- to C-terminus: Putative ribose 5-phosphate isomerase (163 aa).

16 to 17 (DD) contributes to the D-ribulose 5-phosphate binding site. Catalysis depends on C76, which acts as the Proton acceptor. D-ribulose 5-phosphate-binding positions include 77-81 (GTGLG), N110, R120, and K148.

This sequence belongs to the LacAB/RpiB family. As to quaternary structure, homodimer or homotetramer.

This chain is Putative ribose 5-phosphate isomerase, found in Coccidioides immitis (strain RS) (Valley fever fungus).